A 631-amino-acid polypeptide reads, in one-letter code: DNA mismatch repair protein MutL (631 aa).

The protein belongs to the DNA mismatch repair MutL/HexB family.

Functionally, this protein is involved in the repair of mismatches in DNA. It is required for dam-dependent methyl-directed DNA mismatch repair. May act as a 'molecular matchmaker', a protein that promotes the formation of a stable complex between two or more DNA-binding proteins in an ATP-dependent manner without itself being part of a final effector complex. This Mannheimia succiniciproducens (strain KCTC 0769BP / MBEL55E) protein is DNA mismatch repair protein MutL.